A 477-amino-acid polypeptide reads, in one-letter code: Aspartyl/glutamyl-tRNA(Asn/Gln) amidotransferase subunit B (477 aa).

Belongs to the GatB/GatE family. GatB subfamily. Heterotrimer of A, B and C subunits.

The enzyme catalyses L-glutamyl-tRNA(Gln) + L-glutamine + ATP + H2O = L-glutaminyl-tRNA(Gln) + L-glutamate + ADP + phosphate + H(+). The catalysed reaction is L-aspartyl-tRNA(Asn) + L-glutamine + ATP + H2O = L-asparaginyl-tRNA(Asn) + L-glutamate + ADP + phosphate + 2 H(+). In terms of biological role, allows the formation of correctly charged Asn-tRNA(Asn) or Gln-tRNA(Gln) through the transamidation of misacylated Asp-tRNA(Asn) or Glu-tRNA(Gln) in organisms which lack either or both of asparaginyl-tRNA or glutaminyl-tRNA synthetases. The reaction takes place in the presence of glutamine and ATP through an activated phospho-Asp-tRNA(Asn) or phospho-Glu-tRNA(Gln). In Ligilactobacillus salivarius (strain UCC118) (Lactobacillus salivarius), this protein is Aspartyl/glutamyl-tRNA(Asn/Gln) amidotransferase subunit B.